Reading from the N-terminus, the 87-residue chain is Large ribosomal subunit protein bL27 (87 aa).

This sequence belongs to the bacterial ribosomal protein bL27 family.

The sequence is that of Large ribosomal subunit protein bL27 from Stenotrophomonas maltophilia (strain R551-3).